The chain runs to 269 residues: MEDSHKSNTTETASQPGSTVAGPHVSQIVHQVSSLSESEESQDSSDSIGSSQKAHGILARRPSYRKILKDLSSEDTRGRKGEGENPSISAITSMSVPAPIYQTSSGQYIAIAPNGALQLASPSTDGVQALQTLTMTNSSSTQQGTILQYAQTSDGQQILVPSNQVVVQTASGDMQTYQIRTTPSATSLPQTVVMTSPVTLASQTTKTDDPQLRREIRLMKNREAARECRRKKKEYVKCLENRVAVLENQNKTLIEELKTLKDLYSHKSV.

The disordered stretch occupies residues M1–A90. Positions T9–S18 are enriched in polar residues. Residues Q31–A90 enclose the KID domain. S63 bears the Phosphoserine; by CaMK1, CDK3, RPS6KA4 and RPS6KA5 mark. Basic and acidic residues predominate over residues I67 to G83. The residue at position 196 (S196) is a Phosphoserine; by HIPK2. K206 participates in a covalent cross-link: Glycyl lysine isopeptide (Lys-Gly) (interchain with G-Cter in SUMO2). One can recognise a bZIP domain in the interval Q211 to V269. The tract at residues R213 to K237 is basic motif. Positions L239–L260 are leucine-zipper.

Belongs to the bZIP family. ATF subfamily. Binds DNA as a dimer. Interacts with HIPK2 and CDK3. Interacts with MOTS-c, a peptide produced by the mitochondrially encoded 12S rRNA MT-RNR1; the interaction occurs in the nucleus following metabolic stress. Phosphorylated at Ser-196 by HIPK2 in response to genotoxic stress. This phosphorylation promotes transcription repression of FTH1 and other antioxidant detoxification genes. The CDK3-mediated phosphorylation at Ser-63 promotes its transactivation and transcriptional activities. Phosphorylated at Ser-63 by RPS6KA4 and RPS6KA5 in response to mitogenic or stress stimuli.

The protein localises to the nucleus. Functionally, binds the cAMP response element (CRE) (consensus: 5'-GTGACGT[AC][AG]-3'), a sequence present in many viral and cellular promoters. Binds to the Tax-responsive element (TRE) of HTLV-I. Mediates PKA-induced stimulation of CRE-reporter genes. Represses the expression of FTH1 and other antioxidant detoxification genes. Triggers cell proliferation and transformation. The sequence is that of Cyclic AMP-dependent transcription factor ATF-1 (Atf1) from Mus musculus (Mouse).